The primary structure comprises 866 residues: DNA mismatch repair protein MutS (866 aa).

Residue 613–620 (GPNMGGKS) coordinates ATP.

The protein belongs to the DNA mismatch repair MutS family.

This protein is involved in the repair of mismatches in DNA. It is possible that it carries out the mismatch recognition step. This protein has a weak ATPase activity. The sequence is that of DNA mismatch repair protein MutS from Haemophilus ducreyi (strain 35000HP / ATCC 700724).